The chain runs to 2207 residues: DNA polymerase epsilon catalytic subunit A (2207 aa).

Disordered stretches follow at residues 1 to 20 (MPSR…AASF), 1201 to 1233 (SMEK…PFAS), and 1934 to 1961 (RPES…ENEE). Residues cysteine 2075, cysteine 2078, cysteine 2113, and cysteine 2116 each contribute to the Zn(2+) site. The CysA-type zinc-finger motif lies at 2075 to 2116 (CSACCLIRDLDLCRDEDVLPERGSGSGPDSATSSRPWCCPFC). 4 residues coordinate [4Fe-4S] cluster: cysteine 2147, cysteine 2150, cysteine 2162, and cysteine 2164. The short motif at 2147–2164 (CSKCGTLKISEFMEHCSC) is the CysB motif element.

The protein belongs to the DNA polymerase type-B family. As to quaternary structure, heterotetramer. Consists of 4 subunits: pol2, dpb2, dpb3 and dpb4. It depends on [4Fe-4S] cluster as a cofactor.

It localises to the nucleus. The catalysed reaction is DNA(n) + a 2'-deoxyribonucleoside 5'-triphosphate = DNA(n+1) + diphosphate. Functionally, DNA polymerase II participates in chromosomal DNA replication. The protein is DNA polymerase epsilon catalytic subunit A (pol2) of Emericella nidulans (strain FGSC A4 / ATCC 38163 / CBS 112.46 / NRRL 194 / M139) (Aspergillus nidulans).